Reading from the N-terminus, the 620-residue chain is Bicaudal D-related protein homolog (620 aa).

Residues 23-41 are compositionally biased toward low complexity; that stretch reads NNNNNSIVGGSSSSSSGGN. The segment at 23-53 is disordered; that stretch reads NNNNNSIVGGSSSSSSGGNKSKRPRQFGQYS. Coiled-coil stretches lie at residues 120 to 331 and 461 to 575; these read AAEL…LSER and VLEQ…LIDE. 2 stretches are compositionally biased toward basic and acidic residues: residues 493–503 and 509–528; these read KEERDQARGDL and RDEL…DRRT. The disordered stretch occupies residues 493–528; that stretch reads KEERDQARGDLEDNTDRDELLSKAQTERDAANDRRT.

This sequence belongs to the BICDR family. In terms of assembly, may homodimerize but does not interact with BicD. May interact with eEF1gamma; The interaction is probably indirect.

Functions redundantly with BicD. Involved in formation and/or development of mechanosensory organs during metamorphosis. During macrochaetae development, together with BicD, involved in Rab 6 and Spn-F stability and distribution and actin cytoskeleton organization. The polypeptide is Bicaudal D-related protein homolog (Drosophila melanogaster (Fruit fly)).